The sequence spans 347 residues: NADH-ubiquinone oxidoreductase chain 2 (347 aa).

A run of 11 helical transmembrane segments spans residues 1–21 (MNPM…FIVT), 25–45 (HWFM…PVLM), 59–79 (YFLT…INLM), 96–116 (MLIT…FWVP), 122–142 (VSLP…LSLL), 149–169 (VNMN…GWGG), 178–198 (IMAY…VYNP), 201–221 (SLLN…LLIF), 237–257 (APII…LPPL), 274–294 (NSVI…FFYM), and 326–346 (MLPL…LILL).

Belongs to the complex I subunit 2 family. In terms of assembly, core subunit of respiratory chain NADH dehydrogenase (Complex I) which is composed of 45 different subunits. Interacts with TMEM242.

The protein resides in the mitochondrion inner membrane. It carries out the reaction a ubiquinone + NADH + 5 H(+)(in) = a ubiquinol + NAD(+) + 4 H(+)(out). In terms of biological role, core subunit of the mitochondrial membrane respiratory chain NADH dehydrogenase (Complex I) that is believed to belong to the minimal assembly required for catalysis. Complex I functions in the transfer of electrons from NADH to the respiratory chain. The immediate electron acceptor for the enzyme is believed to be ubiquinone. The chain is NADH-ubiquinone oxidoreductase chain 2 from Crocidura suaveolens gueldenstaedtii (Gueldenstaedt's shrew).